Consider the following 177-residue polypeptide: ATP synthase subunit delta (177 aa).

The protein belongs to the ATPase delta chain family. F-type ATPases have 2 components, F(1) - the catalytic core - and F(0) - the membrane proton channel. F(1) has five subunits: alpha(3), beta(3), gamma(1), delta(1), epsilon(1). F(0) has three main subunits: a(1), b(2) and c(10-14). The alpha and beta chains form an alternating ring which encloses part of the gamma chain. F(1) is attached to F(0) by a central stalk formed by the gamma and epsilon chains, while a peripheral stalk is formed by the delta and b chains.

It localises to the cell inner membrane. F(1)F(0) ATP synthase produces ATP from ADP in the presence of a proton or sodium gradient. F-type ATPases consist of two structural domains, F(1) containing the extramembraneous catalytic core and F(0) containing the membrane proton channel, linked together by a central stalk and a peripheral stalk. During catalysis, ATP synthesis in the catalytic domain of F(1) is coupled via a rotary mechanism of the central stalk subunits to proton translocation. Functionally, this protein is part of the stalk that links CF(0) to CF(1). It either transmits conformational changes from CF(0) to CF(1) or is implicated in proton conduction. In Pseudoalteromonas translucida (strain TAC 125), this protein is ATP synthase subunit delta.